Consider the following 298-residue polypeptide: tRNA uridine(34) hydroxylase (298 aa).

Residues 123-217 (QNPDVTLVDT…YLEEIPVAES (95 aa)) form the Rhodanese domain. The Cysteine persulfide intermediate role is filled by C177.

Belongs to the TrhO family.

The catalysed reaction is uridine(34) in tRNA + AH2 + O2 = 5-hydroxyuridine(34) in tRNA + A + H2O. Functionally, catalyzes oxygen-dependent 5-hydroxyuridine (ho5U) modification at position 34 in tRNAs. This is tRNA uridine(34) hydroxylase from Picosynechococcus sp. (strain ATCC 27264 / PCC 7002 / PR-6) (Agmenellum quadruplicatum).